A 308-amino-acid chain; its full sequence is Isoflavone reductase homolog (308 aa).

Residues 11 to 17, R36, and K45 contribute to the NADP(+) site; that span reads GGTGYIG. K133 functions as the Proton acceptor in the catalytic mechanism. An NADP(+)-binding site is contributed by R137.

The protein belongs to the NmrA-type oxidoreductase family. Isoflavone reductase subfamily.

Its subcellular location is the cytoplasm. The protein is Isoflavone reductase homolog of Solanum tuberosum (Potato).